The chain runs to 846 residues: MAQRNGMSPRPPPLGRGRGAGGPSGVGSSPPSSCVPMGAPSTAGTGASAAATTTPGHGVHRVEPRGPPGAPPSSGNNSNFWHGPERLLLSQIPVERQALTELEYQAMGAVWRAAFLANSTGRAMRKWSQRDAGTLLPLGRPYGFYARVTPRSQMNGVGATDLRQLSPRDAWIVLVATVVHEVDPAADPTVGDKAGHPEGLCAQDGLYLALGAGFRVFVYDLANNTLILAARDADEWFRHGAGEVVRLYRCNRLGVGTPRATLLPQPALRQTLLRAEEATALGRELRRRWAGTTVALQTPGRRLQPMVLLGAWQELAQYEPFASAPHPASLLTAVRRHLNQRLCCGWLALGAVLPARWLGCAAGPATGTAAGTTSPPAASGTETEAAGGDAPCAIAGAVGSAVPVPPQPYGAAGGGAICVPNADAHAVVGADAAAAAAPTVMVGSTAMAGPAASGTVPRAMLVVLLDELGAVFGYCPLDGHVYPLAAELSHFLRAGVLGALALGRESAPAAEAARRLLPELDREQWERPRWDALHLHPRAALWAREPHGQWEFMFREQRGDPINDPLAFRLSDARTLGLDLTTVMTERQSQLPEKYIGFYQIRKPPWLMEQPPPPSRQTKPDAATMPPPLSAQASVSYALRYDDESWRPLSTVDDHKAWLDLDESHWVLGDSRPDDIKQRRLLKATQRRGAEIDRPMPVVPEECYDQRFTTEGHQVIPLCASEPEDDDEDPTYDELPSRPPQKHKPPDKPPRLCKTGPGPPPLPPKQRHGSTDGKVSAPRQSEHHKRQTRPPRPPPPKFGDRTAAHLSQNMRDMYLDMCTSSGHRPRPPAPPRPKKCQTHAPHHVHH.

Disordered regions lie at residues 1 to 82, 366 to 385, 606 to 626, and 714 to 846; these read MAQR…NFWH, TGTAAGTTSPPAASGTETEA, WLMEQPPPPSRQTKPDAATMP, and QVIP…HVHH. The segment covering 16 to 25 has biased composition (gly residues); the sequence is RGRGAGGPSG. Over residues 26 to 56 the composition is skewed to low complexity; the sequence is VGSSPPSSCVPMGAPSTAGTGASAAATTTPG. Residues 722-732 show a composition bias toward acidic residues; sequence EPEDDDEDPTY. The segment covering 832 to 846 has biased composition (basic residues); the sequence is RPKKCQTHAPHHVHH.

It belongs to the herpesviridae US22 family. As to quaternary structure, interacts (via N-terminus) with the viral DNA polymerase accessory subunit UL44. Interacts (via C-terminus) with host EIF2AK2/PKR.

It is found in the virion. The protein resides in the host cytoplasm. The protein localises to the host nucleus. Functionally, inhibits the establishment of the antiviral state in the infected cell. Prevents the phosphorylation of the host eukaryotic translation initiation factor eIF-2alpha and thus the shutoff of viral and cellular protein synthesis by directly interacting with EIF2AK2/PKR. May also participate in viral DNA replication by interacting with the DNA polymerase accessory protein and the lytic origin of replication, oriLyt. The sequence is that of Protein IRS1 (IRS1) from Homo sapiens (Human).